A 547-amino-acid polypeptide reads, in one-letter code: Glucose-6-phosphate isomerase (547 aa).

The Proton donor role is filled by glutamate 356. Active-site residues include histidine 387 and lysine 508.

It belongs to the GPI family.

It localises to the cytoplasm. The enzyme catalyses alpha-D-glucose 6-phosphate = beta-D-fructose 6-phosphate. It functions in the pathway carbohydrate biosynthesis; gluconeogenesis. Its pathway is carbohydrate degradation; glycolysis; D-glyceraldehyde 3-phosphate and glycerone phosphate from D-glucose: step 2/4. In terms of biological role, catalyzes the reversible isomerization of glucose-6-phosphate to fructose-6-phosphate. In Cupriavidus taiwanensis (strain DSM 17343 / BCRC 17206 / CCUG 44338 / CIP 107171 / LMG 19424 / R1) (Ralstonia taiwanensis (strain LMG 19424)), this protein is Glucose-6-phosphate isomerase.